We begin with the raw amino-acid sequence, 78 residues long: RNA-binding protein Hfq (78 aa).

Residues 10 to 69 enclose the Sm domain; the sequence is DPFLNTLRKEHVPVSIYLVNGIKLQGQIESFDQYVVLLRNTVTQMVYKHAISTVVPARAV.

Belongs to the Hfq family. Homohexamer.

In terms of biological role, RNA chaperone that binds small regulatory RNA (sRNAs) and mRNAs to facilitate mRNA translational regulation in response to envelope stress, environmental stress and changes in metabolite concentrations. Also binds with high specificity to tRNAs. In Bordetella bronchiseptica (strain ATCC BAA-588 / NCTC 13252 / RB50) (Alcaligenes bronchisepticus), this protein is RNA-binding protein Hfq.